Reading from the N-terminus, the 139-residue chain is Endoribonuclease YbeY (139 aa).

The Zn(2+) site is built by His107, His111, and Asp117.

Belongs to the endoribonuclease YbeY family. Zn(2+) is required as a cofactor.

The protein resides in the cytoplasm. Its function is as follows. Single strand-specific metallo-endoribonuclease involved in late-stage 70S ribosome quality control and in maturation of the 3' terminus of the 16S rRNA. This chain is Endoribonuclease YbeY, found in Azobacteroides pseudotrichonymphae genomovar. CFP2.